A 189-amino-acid chain; its full sequence is UPF0301 protein RPR_01165 (189 aa).

It belongs to the UPF0301 (AlgH) family.

The protein is UPF0301 protein RPR_01165 of Rickettsia peacockii (strain Rustic).